Consider the following 247-residue polypeptide: tRNA pseudouridine synthase A (247 aa).

The Nucleophile role is filled by aspartate 53. Tyrosine 111 contacts substrate.

Belongs to the tRNA pseudouridine synthase TruA family. As to quaternary structure, homodimer.

It carries out the reaction uridine(38/39/40) in tRNA = pseudouridine(38/39/40) in tRNA. Functionally, formation of pseudouridine at positions 38, 39 and 40 in the anticodon stem and loop of transfer RNAs. This Lacticaseibacillus casei (strain BL23) (Lactobacillus casei) protein is tRNA pseudouridine synthase A.